The primary structure comprises 288 residues: Mycothiol S-conjugate amidase (288 aa).

Zn(2+) is bound by residues H12, D15, and H142.

The protein belongs to the MshB deacetylase family. Mca subfamily. As to quaternary structure, monomer. The cofactor is Zn(2+).

It carries out the reaction mycothiol S-conjugate + H2O = an N-acetyl-L-cysteine-S-conjugate + 1D-myo-inositol 2-amino-2-deoxy-alpha-D-glucopyranoside. Its activity is regulated as follows. Partially inhibited by MSH when MSmB (a bimane derivative of MSH) is used as substrate. Its function is as follows. A mycothiol (MSH, N-acetyl-cysteinyl-glucosaminyl-inositol) S-conjugate amidase, it recycles conjugated MSH to the N-acetyl cysteine conjugate and the MSH precursor. Involved in MSH-dependent detoxification of a number of alkylating agents and antibiotics. Activity is specific for the mycothiol moiety. The polypeptide is Mycothiol S-conjugate amidase (Mycolicibacterium smegmatis (strain ATCC 700084 / mc(2)155) (Mycobacterium smegmatis)).